The sequence spans 263 residues: Glutamate 5-kinase (263 aa).

Lys-14 serves as a coordination point for ATP. Substrate contacts are provided by Ser-52, Asp-137, and Asn-149. ATP contacts are provided by residues 169 to 170 (SD) and 211 to 217 (TGGIVTK).

The protein belongs to the glutamate 5-kinase family. In terms of assembly, homotetramer; oligomerization is not affected by L-proline feedback inhibition. Mg(2+) is required as a cofactor.

The catalysed reaction is L-glutamate + ATP = L-glutamyl 5-phosphate + ADP. It participates in amino-acid biosynthesis; L-proline biosynthesis; L-glutamate 5-semialdehyde from L-glutamate: step 1/2. With respect to regulation, inhibited by L-proline as part of a negative feedback loop. Also inhibited by L-proline analogs 3,4-dehydro-L-proline, L-azetidine-2-carboxylic acid and L-4-thiazolidine carboxylic acid. Catalyzes the transfer of a phosphate group to glutamate to form L-glutamate 5-phosphate. May be important for growth and survival. In Leishmania donovani, this protein is Glutamate 5-kinase.